Reading from the N-terminus, the 125-residue chain is MAISKEDVLEYISNLSVLELSELVKEFEEKFGVSAAPVMVAGGAVAGGAVAAAEEKTEFDIVLTDGGAKKIEVIKIVRALTGLGLKEAKDAVEQTPSTLKEGVAKAEAEEAKKQLEEAGAKVELK.

It belongs to the bacterial ribosomal protein bL12 family. In terms of assembly, homodimer. Part of the ribosomal stalk of the 50S ribosomal subunit. Forms a multimeric L10(L12)X complex, where L10 forms an elongated spine to which 2 to 4 L12 dimers bind in a sequential fashion. Binds GTP-bound translation factors.

Functionally, forms part of the ribosomal stalk which helps the ribosome interact with GTP-bound translation factors. Is thus essential for accurate translation. This is Large ribosomal subunit protein bL12 from Campylobacter jejuni subsp. jejuni serotype O:2 (strain ATCC 700819 / NCTC 11168).